A 279-amino-acid chain; its full sequence is Hydroxymethylpyrimidine/phosphomethylpyrimidine kinase (279 aa).

A 4-amino-5-hydroxymethyl-2-methylpyrimidine-binding site is contributed by Gln-54.

The protein belongs to the ThiD family.

It catalyses the reaction 4-amino-5-hydroxymethyl-2-methylpyrimidine + ATP = 4-amino-2-methyl-5-(phosphooxymethyl)pyrimidine + ADP + H(+). The enzyme catalyses 4-amino-2-methyl-5-(phosphooxymethyl)pyrimidine + ATP = 4-amino-2-methyl-5-(diphosphooxymethyl)pyrimidine + ADP. The protein operates within cofactor biosynthesis; thiamine diphosphate biosynthesis; 4-amino-2-methyl-5-diphosphomethylpyrimidine from 5-amino-1-(5-phospho-D-ribosyl)imidazole: step 2/3. It functions in the pathway cofactor biosynthesis; thiamine diphosphate biosynthesis; 4-amino-2-methyl-5-diphosphomethylpyrimidine from 5-amino-1-(5-phospho-D-ribosyl)imidazole: step 3/3. In terms of biological role, catalyzes the phosphorylation of hydroxymethylpyrimidine phosphate (HMP-P) to HMP-PP, and of HMP to HMP-P. The polypeptide is Hydroxymethylpyrimidine/phosphomethylpyrimidine kinase (thiD) (Mycobacterium leprae (strain TN)).